A 590-amino-acid polypeptide reads, in one-letter code: Myo-inositol transporter 3A (590 aa).

Over 1 to 57 (MSATHIENRDDSFLENKGIDHIGRPENNNGSQEPPSPSGFGGHLIDENLVRVEGEDK) the chain is Cytoplasmic. The span at 15-24 (ENKGIDHIGR) shows a compositional bias: basic and acidic residues. Residues 15–40 (ENKGIDHIGRPENNNGSQEPPSPSGF) form a disordered region. A helical membrane pass occupies residues 58–78 (VTWYLCFLISASAIAGFLFGY). Residues 79 to 105 (DTGVVGVALPLVGTDLGGSALNSSQQE) are Extracellular-facing. The N-linked (GlcNAc...) asparagine glycan is linked to Asn100. Residues 106–126 (IITAGTTIGAIFGSAILGGWG) form a helical membrane-spanning segment. At 127-132 (DRLGRK) the chain is on the cytoplasmic side. The chain crosses the membrane as a helical span at residues 133–153 (GAILVSDVFFTIGAVIIASSY). At 154 to 157 (SVPQ) the chain is on the extracellular side. A helical membrane pass occupies residues 158–178 (IIVGRIILGIGVGGAAVIAPL). Over 179 to 192 (FITETAPTAVRGRC) the chain is Cytoplasmic. The helical transmembrane segment at 193–213 (IGVNAFFIPFGQVVSDAIGAG) threads the bilayer. At 214–222 (VQNMHNGWR) the chain is on the extracellular side. A helical transmembrane segment spans residues 223–243 (LLFALGAVPSLLQLLLFHYLP). The Cytoplasmic portion of the chain corresponds to 244 to 325 (ESPRILILKG…AVSALQAAGQ (82 aa)). A helical transmembrane segment spans residues 326 to 346 (LTGFNTLLYYAGTLFGLLGLS). At 347-349 (NPA) the chain is on the extracellular side. A helical transmembrane segment spans residues 350–370 (LGGLIPAGTNAVFVLIGMSLV). At 371-376 (DKVGRR) the chain is on the cytoplasmic side. A helical membrane pass occupies residues 377 to 397 (GLLLIGVPIMLLGHVWNIVSF). Topologically, residues 398–420 (YYMCKPTGGFLDTSYSYDTTDVG) are extracellular. Residues 421–441 (IVIGGIVFFVVGYGLTYSHLV) traverse the membrane as a helical segment. At 442–455 (WYQAEYLTLEVRSM) the chain is on the cytoplasmic side. A helical membrane pass occupies residues 456–476 (GSGIATTVCWIANLVVSVSYL). The Extracellular segment spans residues 477–485 (SELETMTPS). A helical membrane pass occupies residues 486–506 (GTYGFYFGISVIGFVFLVFCL). Residues 507–590 (PETKQLSIDE…GGKRTPSASV (84 aa)) lie on the Cytoplasmic side of the membrane.

Belongs to the major facilitator superfamily. Sugar transporter (TC 2.A.1.1) family.

It is found in the cell membrane. It catalyses the reaction myo-inositol(out) + H(+)(out) = myo-inositol(in) + H(+)(in). In terms of biological role, transporter for myo-inositol. The protein is Myo-inositol transporter 3A (ITR3A) of Cryptococcus neoformans var. grubii serotype A (strain H99 / ATCC 208821 / CBS 10515 / FGSC 9487) (Filobasidiella neoformans var. grubii).